A 233-amino-acid polypeptide reads, in one-letter code: Protein lin-7 homolog A (233 aa).

One can recognise an L27 domain in the interval 25–80; the sequence is LDRDVARAIELLEKLQESGEVPVHKLQSLKKVLQSEFCTAIREVYQYMHETITVNG. The region spanning 108–190 is the PDZ domain; the sequence is VVELPKTDEG…SVKLVVRYTP (83 aa).

The protein belongs to the lin-7 family. Forms a complex with CASK and CASKIN1. Component of the brain-specific heterotrimeric complex (LIN-10-LIN-2-LIN-7 complex) composed of at least APBA1, CASK, and LIN7, which associates with the motor protein KIF17 to transport vesicles along microtubules. Can also interact with other modular proteins containing protein-protein interaction domains like PALS1, PALS2, MPP7, DLG1, DLG2 and DLG3 through its L27 domain. Interacts with DLG4, GRIN2B and MARCHF11 as well as CDH1 and CTNNB1, the channels KCNJ12/Kir2.2, KCNJ4/Kir2.3 and probably KCNJ2/Kir2.1 and SLC6A12/BGT-1 via its PDZ domain. The association of LIN7A with cadherin and beta-catenin is calcium-dependent, occurs at synaptic junctions and requires the actin cytoskeleton. Interacts with EGFR, ERBB2, ERBB3 and ERBB4 with both PDZ and KID domains. Associates with KIF17 via APBA1. Interacts with HTR4. Forms a tripartite complex composed of DLG1, MPP7 and LIN7 (LIN7A or LIN7C).

The protein resides in the cell membrane. It is found in the basolateral cell membrane. It localises to the cell junction. Its subcellular location is the postsynaptic density membrane. The protein localises to the tight junction. Its function is as follows. Plays a role in establishing and maintaining the asymmetric distribution of channels and receptors at the plasma membrane of polarized cells. Forms membrane-associated multiprotein complexes that may regulate delivery and recycling of proteins to the correct membrane domains. The tripartite complex composed of LIN7 (LIN7A, LIN7B or LIN7C), CASK and APBA1 associates with the motor protein KIF17 to transport vesicles containing N-methyl-D-aspartate (NMDA) receptor subunit NR2B along microtubules. This complex may have the potential to couple synaptic vesicle exocytosis to cell adhesion in brain. Ensures the proper localization of GRIN2B (subunit 2B of the NMDA receptor) to neuronal postsynaptic density and may function in localizing synaptic vesicles at synapses where it is recruited by beta-catenin and cadherin. Required to localize Kir2 channels, GABA transporter (SLC6A12) and EGFR/ERBB1, ERBB2, ERBB3 and ERBB4 to the basolateral membrane of epithelial cells. In Bos taurus (Bovine), this protein is Protein lin-7 homolog A (LIN7A).